A 1082-amino-acid chain; its full sequence is Transcription elongation factor SPT5 (1082 aa).

Residues 1-28 are compositionally biased toward acidic residues; sequence MSDSEDSNFSEEEDSERSSEAEEAEVEE. A disordered region spans residues 1 to 88; it reads MSDSEDSNFS…DVDDEYEDED (88 aa). 2 positions are modified to phosphoserine: Ser-32 and Ser-36. Composition is skewed to acidic residues over residues 38–62 and 76–88; these read KEEEPEEEEEEEEEYDEEEEEEDDD and DEADVDDEYEDED. Lys-141 participates in a covalent cross-link: Glycyl lysine isopeptide (Lys-Gly) (interchain with G-Cter in SUMO2). Positions 174–268 are interaction with SUPT4H1 and SUPT4H2; sequence DPNLWTVKCK…TDVLKVVKEV (95 aa). A KOW 1 domain is found at 271-304; that stretch reads LKPKSWVRLKRGIYKDDIAQVDYVEPSQNTISLK. The segment at 311 to 418 is interaction with RNA polymerase II; that stretch reads YDRIKARMSL…STGKEREHNF (108 aa). Residues 326–332 carry the UBR5-degron motif; that stretch reads KRKKFKR. 2 consecutive KOW domains span residues 418–449 and 470–501; these read FQPGDNVEVCEGELINLQGKVLSVDGNKITIM and FKMGDHVKVIAGRFEGDTGLIVRVEENFVILF. Position 577 (Lys-577) interacts with RNA. A KOW 4 domain is found at 592–625; the sequence is IHVKDIVKVIDGPHSGREGEIRHLYRSFAFLHCK. DNA is bound at residue Arg-617. Thr-661 is modified (phosphothreonine). 2 positions are modified to phosphoserine: Ser-664 and Ser-684. The interval 669 to 694 is disordered; sequence SPMHPSAEGQHGGFGSPGGMSRGRGR. Positions 678-690 are enriched in gly residues; sequence QHGGFGSPGGMSR. Arg-690 and Arg-692 each carry asymmetric dimethylarginine; alternate. An omega-N-methylarginine; alternate mark is found at Arg-690 and Arg-692. Arg-692 carries the post-translational modification Symmetric dimethylarginine; alternate. One can recognise a KOW 5 domain in the interval 698 to 731; sequence ELIGQTVRISQGPYKGYIGVVKDATESTARVELH. An N6-acetyllysine modification is found at Lys-712. Over residues 741 to 801 the composition is skewed to polar residues; that stretch reads RQRLTTVDSQ…RTPHYGSQTP (61 aa). A disordered region spans residues 741-972; sequence RQRLTTVDSQ…GSGIEQNSSD (232 aa). The stretch at 748 to 753 is one CTR1-1; approximate repeat; sequence DSQRPG. A 9 X 7 AA approximate tandem repeats of G-S-[QR]-T-P-X-[YQ], motif CTR1 region spans residues 748 to 811; that stretch reads DSQRPGGMTS…LHDGSRTPAQ (64 aa). Residues 754–759 form a CTR1-2 repeat; that stretch reads GMTSTY. The CTR1-3 repeat unit spans residues 760–765; that stretch reads GRTPMY. A CTR1-4 repeat occupies 766–772; sequence GSQTPMY. A phosphothreonine; by CDK9 mark is found at Thr-769 and Thr-778. Residues 775–781 form a CTR1-5 repeat; the sequence is GSRTPMY. One copy of the CTR1-6 repeat lies at 782–788; it reads GSQTPLQ. Phosphoserine is present on Ser-783. Phosphothreonine occurs at positions 785 and 793. The CTR1-7 repeat unit spans residues 790–796; sequence GSRTPHY. Residues 797–803 form a CTR1-8 repeat; the sequence is GSQTPLH. Ser-798 bears the Phosphoserine mark. 2 positions are modified to phosphothreonine: Thr-800 and Thr-808. One copy of the CTR1-9 repeat lies at 805–811; it reads GSRTPAQ. The segment covering 828-838 has biased composition (acidic residues); that stretch reads EEYEYAFDDEP. A CTR2-1 repeat occupies 838-845; the sequence is PTPSPQAY. The interval 838–944 is 10 X 8 AA approximate tandem repeats of P-[TS]-P-S-P-[QA]-[SG]-Y, motif CTR2; it reads PTPSPQAYGG…ASPSPSPVGY (107 aa). A CTR2-2; approximate repeat occupies 848–856; that stretch reads TPNPQTPGY. Residues 851–860 show a composition bias toward pro residues; that stretch reads PQTPGYPDPS. The stretch at 857–863 is one CTR2-3; approximate repeat; that stretch reads PDPSSPQ. Over residues 861 to 884 the composition is skewed to polar residues; sequence SPQVNPQYNPQTPGTPAMYNTDQF. A CTR2-4; half-length repeat occupies 875–879; sequence TPAMY. Residues 890-896 form a CTR2-5; approximate repeat; that stretch reads PSPQGSY. Residues 890–905 show a composition bias toward low complexity; that stretch reads PSPQGSYQPSPSPQSY. One copy of the CTR2-6 repeat lies at 898-905; it reads PSPSPQSY. The CTR2-7; approximate repeat unit spans residues 910-915; that stretch reads PSPAGY. A CTR2-8 repeat occupies 918 to 924; sequence THSPASY. A CTR2-9 repeat occupies 926–933; that stretch reads PTPSPMAY. Residues 937 to 944 form a CTR2-10 repeat; that stretch reads PSPSPVGY. Phosphothreonine is present on Thr-1028. Lys-1031 participates in a covalent cross-link: Glycyl lysine isopeptide (Lys-Gly) (interchain with G-Cter in SUMO2).

This sequence belongs to the SPT5 family. Interacts with SUPT4H1 to form DSIF. DSIF interacts with the positive transcription elongation factor b complex (P-TEFb complex), which is composed of CDK9 and cyclin-T (CCNT1 or CCNT2). DSIF interacts with RNA polymerase II, and this interaction is reduced by phosphorylation of the C-terminal domain (CTD) of POLR2A by P-TEFb. DSIF also interacts with the NELF complex, which is composed of NELFA, NELFB, NELFD and NELFE, and this interaction occurs following prior binding of DSIF to RNA polymerase II. Also interacts with PRMT1/HRMT1L2, HTATSF1/TATSF1, RNGTT/CAP1A, PRMT5/SKB1, SUPT6H, and can interact with PIN1. Component of a complex which is at least composed of HTATSF1/Tat-SF1, the P-TEFb complex components CDK9 and CCNT1, RNA polymerase II, SUPT5H, and NCL/nucleolin. Interacts with MCM3AP. In terms of processing, methylated by PRMT1/HRMT1L2 and PRMT5/SKB1. Methylation negatively regulates interaction with P-TEFb and RNA polymerase II. Post-translationally, phosphorylated by CDK7 and CDK9. Phosphorylation by P-TEFb (CDK9) at Thr residues of the C-terminal repeats alleviates transcriptional pausing and promotes transcription elongation. Dephosphorylated by the INTAC complex when transcripts are unfavorably configured for transcriptional elongation, leading to premature transcription termination: dephosphorylation is mediated by the PPP2CA component of the INTAC complex. Dephosphorylated by the PNUTS-PP1 complex in termination zones downstream of poly(A) sites, thereby promoting deceleration of RNA polymerase II transcription. Dephosphorylated by the PNUTS-PP1 complex in termination zones downstream of poly(A) sites, thereby promoting deceleration of RNA polymerase II transcription. Phosphorylation may also stimulate interaction with PIN1. Bulk phosphorylation occurs predominantly in mitosis. Ubiquitinated by UBR5 when not assembled in the DSIF complex, leading to its degradation: UBR5 recognizes and binds a degron that is not accessible when SUPT5H is part of the DSIF complex.

The protein resides in the nucleus. Component of the DRB sensitivity-inducing factor complex (DSIF complex), which regulates mRNA processing and transcription elongation by RNA polymerase II. DSIF positively regulates mRNA capping by stimulating the mRNA guanylyltransferase activity of RNGTT/CAP1A. DSIF also acts cooperatively with the negative elongation factor complex (NELF complex) to enhance transcriptional pausing at sites proximal to the promoter. Transcriptional pausing may facilitate the assembly of an elongation competent RNA polymerase II complex. DSIF and NELF promote pausing by inhibition of the transcription elongation factor TFIIS/S-II. TFIIS/S-II binds to RNA polymerase II at transcription pause sites and stimulates the weak intrinsic nuclease activity of the enzyme. Cleavage of blocked transcripts by RNA polymerase II promotes the resumption of transcription from the new 3' terminus and may allow repeated attempts at transcription through natural pause sites. Following phosphorylation by CDK9, DSIF can also positively regulate transcriptional elongation. The protein is Transcription elongation factor SPT5 (Supt5h) of Mus musculus (Mouse).